Reading from the N-terminus, the 207-residue chain is Large ribosomal subunit protein uL3 (207 aa).

The tract at residues 113–148 is disordered; the sequence is KGKGFQGPIKRHGQSRGPMAHGSRYHRRPGSMGPVA.

It belongs to the universal ribosomal protein uL3 family. As to quaternary structure, part of the 50S ribosomal subunit. Forms a cluster with proteins L14 and L19.

Its function is as follows. One of the primary rRNA binding proteins, it binds directly near the 3'-end of the 23S rRNA, where it nucleates assembly of the 50S subunit. The chain is Large ribosomal subunit protein uL3 from Lactococcus lactis subsp. lactis (strain IL1403) (Streptococcus lactis).